The following is a 515-amino-acid chain: Maturase K (515 aa).

Belongs to the intron maturase 2 family. MatK subfamily.

It localises to the plastid. Its subcellular location is the chloroplast. Its function is as follows. Usually encoded in the trnK tRNA gene intron. Probably assists in splicing its own and other chloroplast group II introns. This is Maturase K from Larix laricina (Tamarack).